Reading from the N-terminus, the 347-residue chain is MNIENEVHIENASESKREPKPPEGLLEDDTIYITTPYGKISLDGGRIQVKDSDGEIVASFPLEKVCTMNVFGSASVSTPLLKHCSDKEVVINYFTNFGKYFGSFVPSRNTIALVRRHQAGITKEKSLAICREIIHAKLQNSCVFLARKRVEVPSLLKELRDRSLHAVSVDSLRGIEGEAASIYFPMLSSSLPDEWRSDKRTRRPPRDELNALLSLTYTMVNTEVISALRQYNLDPFIGVMHVDRHGKPALALDLLEEFRPVFCDAFVARLINKRMITKDDFTQGSRLNDTAFKKYLGFYHDFMEESLKHPRFKYSVSRKKAIQIQAIIFRKAICGELKGYYPFIYAR.

The span at 1–21 (MNIENEVHIENASESKREPKP) shows a compositional bias: basic and acidic residues. A disordered region spans residues 1 to 25 (MNIENEVHIENASESKREPKPPEGL). Positions 176, 241, and 256 each coordinate Mn(2+).

The protein belongs to the CRISPR-associated endonuclease Cas1 family. Homodimer, forms a heterotetramer with a Cas2 homodimer. Requires Mg(2+) as cofactor. It depends on Mn(2+) as a cofactor.

In terms of biological role, CRISPR (clustered regularly interspaced short palindromic repeat), is an adaptive immune system that provides protection against mobile genetic elements (viruses, transposable elements and conjugative plasmids). CRISPR clusters contain spacers, sequences complementary to antecedent mobile elements, and target invading nucleic acids. CRISPR clusters are transcribed and processed into CRISPR RNA (crRNA). Acts as a dsDNA endonuclease. Involved in the integration of spacer DNA into the CRISPR cassette. This chain is CRISPR-associated endonuclease Cas1 4, found in Methanospirillum hungatei JF-1 (strain ATCC 27890 / DSM 864 / NBRC 100397 / JF-1).